A 584-amino-acid chain; its full sequence is Vesicular glutamate transporter 2.1 (584 aa).

The Cytoplasmic segment spans residues 1-70; that stretch reads METPREPAGF…CTCFGLPRRY (70 aa). A helical transmembrane segment spans residues 71–91; sequence IIAIMSGLGFCISFGIRCNLG. The Vesicular portion of the chain corresponds to 92-124; the sequence is VAIVSMVNNSTIHLNGKIIIKEKAKFNWDPETV. N-linked (GlcNAc...) asparagine glycans are attached at residues Asn99 and Asn100. The chain crosses the membrane as a helical span at residues 125–145; it reads GLIHGSFFWGYIVTQIPGGYI. Residues 146–148 lie on the Cytoplasmic side of the membrane; that stretch reads SSR. A helical transmembrane segment spans residues 149–169; the sequence is LAANRVFGAAILLTSTLNMFI. Residues 170 to 177 are Vesicular-facing; the sequence is PSAARGHY. The helical transmembrane segment at 178 to 198 threads the bilayer; the sequence is GCVIFVRILQGLVEGVTYPAC. Residues 199–216 lie on the Cytoplasmic side of the membrane; that stretch reads HGIWSKWAPPLERSRLAT. Residues 217–237 traverse the membrane as a helical segment; that stretch reads TSFCGSYAGAVIAMPLAGILV. Residues 238–244 lie on the Vesicular side of the membrane; that stretch reads QYTGWSS. Residues 245-265 form a helical membrane-spanning segment; the sequence is VFYVYGCFGIFWYMFWILVSY. Topologically, residues 266–310 are cytoplasmic; that stretch reads ESPAEHPTITAEERCYIEESIGESAKLLGPADKFKTPWRKFFTSM. The chain crosses the membrane as a helical span at residues 311-331; the sequence is PVYAIIVANFCRSWTFYLLLI. Residues 332–349 are Vesicular-facing; that stretch reads SQPAYFEEVFGFEISKVG. Residues 350–370 form a helical membrane-spanning segment; sequence MLSALPHLVMTIIVPIGGQLA. Residues 371–386 are Cytoplasmic-facing; sequence DHLRSKNILSTTTVRK. A helical transmembrane segment spans residues 387–407; the sequence is IMNCGGFGMEATLLLIVGYSH. Topologically, residues 408–409 are vesicular; that stretch reads SK. Residues 410–430 form a helical membrane-spanning segment; the sequence is GVAISFLVLAVGFSGFAISGF. The Cytoplasmic portion of the chain corresponds to 431–445; that stretch reads NVNHLDIAPRYASIL. The helical transmembrane segment at 446-466 threads the bilayer; sequence MGISNGVGTLSGMVCPLIVGA. Residues 467–477 are Vesicular-facing; the sequence is MTKHKTREEWQ. A helical transmembrane segment spans residues 478 to 498; the sequence is YVFLIASLVHYGGVIFYGIFA. The Cytoplasmic portion of the chain corresponds to 499–584; that stretch reads SGEKQPWADP…YGYRQGGNYS (86 aa).

This sequence belongs to the major facilitator superfamily. Sodium/anion cotransporter family. VGLUT subfamily. In terms of tissue distribution, expressed in spinal cord and retinal ganglion cells.

The protein localises to the cytoplasmic vesicle. It is found in the secretory vesicle. The protein resides in the synaptic vesicle membrane. Its subcellular location is the membrane. It localises to the synapse. The protein localises to the synaptosome. It is found in the cell membrane. It catalyses the reaction L-glutamate(out) = L-glutamate(in). The enzyme catalyses 3 Na(+)(out) + phosphate(out) = 3 Na(+)(in) + phosphate(in). The catalysed reaction is phosphate(in) = phosphate(out). It carries out the reaction K(+)(in) + H(+)(out) = K(+)(out) + H(+)(in). It catalyses the reaction chloride(in) = chloride(out). With respect to regulation, chloride channel activity is allosterically activated by lumenal H(+) and Cl(-) leading to synaptic vesicles acidification. The L-glutamate transport activity is allosterically activated by lumenal H(+) and Cl(-). The allosteric requirement for H(+) efficiently prevents non-vesicular efflux across the plasma membrane. The L-glutamate uniporter activity exhibits a biphasic dependence on chloride concentration. Functionally, multifunctional transporter that transports L-glutamate as well as multiple ions such as chloride, proton, potassium, sodium and phosphate. At the synaptic vesicle membrane, mainly functions as a uniporter which transports preferentially L-glutamate but also, phosphate from the cytoplasm into synaptic vesicles at presynaptic nerve terminals of excitatory neural cells. The L-glutamate or phosphate uniporter activity is electrogenic and is driven by the proton electrochemical gradient, mainly by the electrical gradient established by the vacuolar H(+)-ATPase across the synaptic vesicle membrane. In addition, functions as a chloride channel that allows a chloride permeation through the synaptic vesicle membrane therefore affects the proton electrochemical gradient and promotes synaptic vesicles acidification. Moreover, functions as a vesicular K(+)/H(+) antiport allowing to maintain the electrical gradient and to decrease chemical gradient and therefore sustain vesicular L-glutamate uptake. The vesicular H(+)/H(+) antiport activity is electroneutral. At the plasma membrane, following exocytosis, functions as a symporter of Na(+) and phosphate from the extracellular space to the cytoplasm allowing synaptic phosphate homeostasis regulation. The symporter activity is driven by an inside negative membrane potential and is electrogenic. Also involved in the regulation of retinal hyaloid vessel regression during postnatal development. May also play a role in the endocrine L-glutamatergic system of other tissues such as pineal gland and pancreas. Required for glutamate release by retinotectal synapses and visual acuity. The polypeptide is Vesicular glutamate transporter 2.1 (slc17a6b) (Danio rerio (Zebrafish)).